The primary structure comprises 532 residues: Putative sodium-dependent excitatory amino acid transporter glt-3 (532 aa).

The Cytoplasmic portion of the chain corresponds to 1–5 (MGMKK). The next 3 helical transmembrane spans lie at 6–26 (DLLL…GFVI), 46–66 (FMQI…ISAL), and 83–103 (IYYM…VSSI). The Extracellular portion of the chain corresponds to 104 to 181 (HPGDPELIHE…SEVLHKQTLT (78 aa)). N-linked (GlcNAc...) asparagine glycans are attached at residues Asn-164 and Asn-169. The next 5 membrane-spanning stretches (helical) occupy residues 182–202 (YTNE…GIIL), 222–242 (IIMR…LSLV), 264–284 (VTVI…LYFL), 352–372 (AVAV…MDLV), and 383–402 (IGSG…LTTV).

The protein belongs to the dicarboxylate/amino acid:cation symporter (DAACS) (TC 2.A.23) family.

The protein resides in the membrane. This chain is Putative sodium-dependent excitatory amino acid transporter glt-3 (glt-3), found in Caenorhabditis elegans.